Reading from the N-terminus, the 103-residue chain is Phosphoribosyl-ATP pyrophosphatase (103 aa).

Belongs to the PRA-PH family.

It is found in the cytoplasm. It carries out the reaction 1-(5-phospho-beta-D-ribosyl)-ATP + H2O = 1-(5-phospho-beta-D-ribosyl)-5'-AMP + diphosphate + H(+). Its pathway is amino-acid biosynthesis; L-histidine biosynthesis; L-histidine from 5-phospho-alpha-D-ribose 1-diphosphate: step 2/9. This is Phosphoribosyl-ATP pyrophosphatase (hisE) from Rhodobacter capsulatus (strain ATCC BAA-309 / NBRC 16581 / SB1003).